The following is a 312-amino-acid chain: MAQRKKIALIGAGQIGGTLALLAGQKELGDVVLVDIMEGVAKGKALDLQETRGVGKWDVDVTGGGTTDYSVIRDADVCIVTAGVPRKPGMSREDLLKVNLDAITKVAHGIKQYAPNAFVIVITNPLDSMVYAMYKVTGFPKNRVVGMAGVLDTARFQYFVGDAAGVSPQDVQAMVLGGHGDDMVPLLRYSSVAGVPLTRLLDKAKLDAIVERTRKGGGEIVALLGTGSAFYAPAASAIAMAESYLRDKKRVLPCSALLEGQYGVKGLFVGVPVVIGAGGVERVLELELNDDERAMLQRSVDSVKKSVAETKL.

NAD(+) contacts are provided by residues 11–16 (GAGQIG) and Asp-35. The substrate site is built by Arg-86 and Arg-92. NAD(+) is bound by residues Asn-99 and 122–124 (ITN). The substrate site is built by Asn-124 and Arg-155. Catalysis depends on His-179, which acts as the Proton acceptor.

Belongs to the LDH/MDH superfamily. MDH type 3 family.

It carries out the reaction (S)-malate + NAD(+) = oxaloacetate + NADH + H(+). Its function is as follows. Catalyzes the reversible oxidation of malate to oxaloacetate. In Anaeromyxobacter dehalogenans (strain 2CP-C), this protein is Malate dehydrogenase 1.